We begin with the raw amino-acid sequence, 598 residues long: NADPH-dependent diflavin oxidoreductase 1 (598 aa).

A Flavodoxin-like domain is found at 6 to 150 (LLVLFGSQTG…AIDPWVGDLW (145 aa)). FMN is bound by residues 12–17 (SQTGTA), 59–62 (ATTG), 97–106 (LGDSSYAKFN), and Asp132. One can recognise an FAD-binding FR-type domain in the interval 206-448 (LQPFLAPVIT…VRPGSLVFPK (243 aa)). FAD-binding positions include Arg350, 382–385 (RAFS), and 416–419 (GLCS). NADP(+)-binding positions include Thr461, 516–517 (SR), 522–526 (KVYVQ), and Asp559. Trp597 contacts FAD.

This sequence belongs to the NADPH-dependent diflavin oxidoreductase NDOR1 family. The protein in the N-terminal section; belongs to the flavodoxin family. In the C-terminal section; belongs to the flavoprotein pyridine nucleotide cytochrome reductase family. In terms of assembly, interacts with CIAPIN1; as part of the cytosolic iron-sulfur (Fe-S) protein assembly (CIA) machinery. Interacts with DCPS. FAD serves as cofactor. The cofactor is FMN.

Its subcellular location is the cytoplasm. The protein resides in the perinuclear region. The catalysed reaction is 2 oxidized [2Fe-2S]-[protein] + NADPH = 2 reduced [2Fe-2S]-[protein] + NADP(+) + H(+). Its function is as follows. NADPH-dependent reductase which is a central component of the cytosolic iron-sulfur (Fe-S) protein assembly (CIA) machinery. Transfers electrons from NADPH via its FAD and FMN prosthetic groups to the [2Fe-2S] cluster of CIAPIN1, another key component of the CIA machinery. In turn, this reduced cluster provides electrons for assembly of cytosolic iron-sulfur cluster proteins. It can also reduce the [2Fe-2S] cluster of CISD1 and activate this protein implicated in Fe/S cluster repair. In vitro can fully activate methionine synthase/MTR in the presence of soluble cytochrome b5/CYB5A. In Mus musculus (Mouse), this protein is NADPH-dependent diflavin oxidoreductase 1.